Consider the following 255-residue polypeptide: tRNA (adenine(58)-N(1))-methyltransferase TrmI (255 aa).

S-adenosyl-L-methionine contacts are provided by residues 104–107, Glu125, His130, Glu155, and Asp170; that span reads SGGL.

It belongs to the class I-like SAM-binding methyltransferase superfamily. TRM61 family. Homotetramer composed of a dimer of dimers.

It carries out the reaction adenosine(58) in tRNA + S-adenosyl-L-methionine = N(1)-methyladenosine(58) in tRNA + S-adenosyl-L-homocysteine + H(+). Catalyzes the S-adenosyl-L-methionine-dependent formation of N(1)-methyladenine at position 58 (m1A58) in tRNA. Is required for cell growth at extreme temperatures. The chain is tRNA (adenine(58)-N(1))-methyltransferase TrmI (trmI) from Thermus thermophilus (strain ATCC BAA-163 / DSM 7039 / HB27).